We begin with the raw amino-acid sequence, 78 residues long: Probable [Fe-S]-dependent transcriptional repressor (78 aa).

Iron-sulfur cluster contacts are provided by C56, C61, C64, and C70.

It belongs to the FeoC family.

May function as a transcriptional regulator that controls feoABC expression. The polypeptide is Probable [Fe-S]-dependent transcriptional repressor (Enterobacter sp. (strain 638)).